The primary structure comprises 576 residues: MKASKYILPTEKENPADAVVASHRLMIRAGLVRKSSAGLYFYLPLGLKVLKKIEQIVREEMNSTGALEFDLPILTPSDFWEQSGRWSAMGKEMFRIQDRHDLSYALGPTHEESFSFLLKPLLKSYKDLPVNVYQIQTKFRDEIRPRFGVIRSREFIMKDAYSFHIDDSSLDDTYQAMRVAYRKIFDRCGLKTIPVQADSGSMGGSASEEFMVVSPIGEETLLLCNSCGYSSNSEKTPLILKKENGSAKFSEKKEISTPGKKTISEVSTLLGVSESETIKAVALKSEKKKILVFLRGDLELNLHKLHSLLKIADSEPMTDLEIRELGLIPGFISPIAPNDKIKVLYDRSLQKDFPYVVGSSKEDFHTQGFILEKEISGLPEFADVALAREGDLCPNCSSPLKAEKGIEVGHIFKLGDKYTKAFGIQVLDQNGKSKTLTTGCYGIGVNRTMATVIEQCNDEKGIFWPISIAPFEVSLVSIVKGEDQYSKIEEFYNVLINEGIEVFWDDRDLGPGFKLKDSELIGFPIRITIGKKFFESGEISIYNRKKDQEDSFVFSGFDDLVARVESMRQELFTELR.

It belongs to the class-II aminoacyl-tRNA synthetase family. ProS type 1 subfamily. As to quaternary structure, homodimer.

It is found in the cytoplasm. The enzyme catalyses tRNA(Pro) + L-proline + ATP = L-prolyl-tRNA(Pro) + AMP + diphosphate. Functionally, catalyzes the attachment of proline to tRNA(Pro) in a two-step reaction: proline is first activated by ATP to form Pro-AMP and then transferred to the acceptor end of tRNA(Pro). As ProRS can inadvertently accommodate and process non-cognate amino acids such as alanine and cysteine, to avoid such errors it has two additional distinct editing activities against alanine. One activity is designated as 'pretransfer' editing and involves the tRNA(Pro)-independent hydrolysis of activated Ala-AMP. The other activity is designated 'posttransfer' editing and involves deacylation of mischarged Ala-tRNA(Pro). The misacylated Cys-tRNA(Pro) is not edited by ProRS. The polypeptide is Proline--tRNA ligase (Leptospira interrogans serogroup Icterohaemorrhagiae serovar copenhageni (strain Fiocruz L1-130)).